The following is a 374-amino-acid chain: Probable aminopeptidase YDR415C (374 aa).

The signal sequence occupies residues 1 to 18 (MRIQSLFVLFNVAIIAWS). 5 residues coordinate Zn(2+): His-177, Asp-196, Glu-235, Asp-262, and His-340.

The protein belongs to the peptidase M28 family. M28E subfamily. Requires Zn(2+) as cofactor.

This Saccharomyces cerevisiae (strain ATCC 204508 / S288c) (Baker's yeast) protein is Probable aminopeptidase YDR415C.